The sequence spans 149 residues: Large ribosomal subunit protein bL9 (149 aa).

This sequence belongs to the bacterial ribosomal protein bL9 family.

Functionally, binds to the 23S rRNA. In Actinobacillus pleuropneumoniae serotype 3 (strain JL03), this protein is Large ribosomal subunit protein bL9.